The sequence spans 737 residues: LIMR family protein R05D3.2 (737 aa).

Acidic residues predominate over residues 280–293 (ADIEEENSEQSEDV). The segment at 280-416 (ADIEEENSEQ…PKKPKNPNFD (137 aa)) is disordered. Over residues 303 to 318 (ETIHQVDRSDTPHLED) the composition is skewed to basic and acidic residues.

It belongs to the LIMR family.

This is LIMR family protein R05D3.2 from Caenorhabditis elegans.